Here is a 428-residue protein sequence, read N- to C-terminus: Putative UDP-glucose 6-dehydrogenase YtcA (428 aa).

Residues 1–23 (MKICVVGAGYVGLTLSAALASIG) form the signal peptide. Residues 2–19 (KICV…SAAL), Val11, Asp30, Lys35, Thr118, and Glu152 each bind NAD(+). Substrate is bound by residues 148 to 152 (EFLRE), Lys203, Asn207, 248 to 252 (FLQAG), and Gly256. The active-site Nucleophile is the Cys259. Lys262 lines the NAD(+) pocket. Position 319 (Lys319) interacts with substrate. Arg326 contributes to the NAD(+) binding site.

The protein belongs to the UDP-glucose/GDP-mannose dehydrogenase family.

The catalysed reaction is UDP-alpha-D-glucose + 2 NAD(+) + H2O = UDP-alpha-D-glucuronate + 2 NADH + 3 H(+). Its pathway is nucleotide-sugar biosynthesis; UDP-alpha-D-glucuronate biosynthesis; UDP-alpha-D-glucuronate from UDP-alpha-D-glucose: step 1/1. Catalyzes the conversion of UDP-glucose into UDP-glucuronate, one of the precursors of teichuronic acid. This chain is Putative UDP-glucose 6-dehydrogenase YtcA (ytcA), found in Bacillus subtilis (strain 168).